A 186-amino-acid chain; its full sequence is MLALISRLLDWFRSLFWKEEMELTLVGLQYSGKTTFVNVIASGQFSEDMIPTVGFNMRKVTKGNVTIKIWDIGGQPRFQSMWERYCRGVNAIVYMIDAADREKIEASRNELHNLLDKPQLQGIPVLVLGNKRDLPNALDEKQLIEKMNLSAIQDREICCYSISCKEKDNIDITLQWLIQHSKSRRS.

An intramembrane region (note=Mediates targeting to membranes) is located at residues 1–19 (MLALISRLLDWFRSLFWKE). GTP-binding positions include 29–35 (QYSGKTT), 71–75 (DIGGQ), and 130–133 (NKRD). Lys-141 participates in a covalent cross-link: Glycyl lysine isopeptide (Lys-Gly) (interchain with G-Cter in ubiquitin).

This sequence belongs to the small GTPase superfamily. Arf family. In terms of assembly, interacts with tubulin. Interacts with BORCS5; recruits ARL8B to lysosomes. Interacts with VPS41; the interaction mediates the recruitment of the HOPS complex to lysosomes. Interacts (GTP-bound form) with PLEKHM2 (via RUN domain); the interaction is required to recruit the motor protein kinesin-1 on lysosomes. Interacts (GTP-bound form) with PLEKHM1 (via RUN domain); the interaction is required for PLEKHM1 localization to lysosomes and for ARL8B function in delivery and degradation of endocytic and autophagic cargo in lysosomes. PLEKHM1 and PLEKHM2 compete for interaction with ARL8B. Interacts (GTP-bound form) with RUFY1; the interaction is required for RUFY1 endosomal location. When GTP-bound, interacts with RUFY3 and RUFY4, but not with RUFY1, nor RUFY2. Ubiquitinated at Lys-141 by RNF167, leading to its degradation.

It is found in the late endosome membrane. The protein localises to the lysosome membrane. It localises to the cytoplasm. The protein resides in the cytoskeleton. Its subcellular location is the spindle. It is found in the cell projection. The protein localises to the axon. It localises to the synapse. The protein resides in the cytolytic granule membrane. Its subcellular location is the early endosome membrane. It carries out the reaction GTP + H2O = GDP + phosphate + H(+). In terms of biological role, small GTPase which cycles between active GTP-bound and inactive GDP-bound states. In its active state, binds to a variety of effector proteins playing a key role in the regulation of lysosomal positioning which is important for nutrient sensing, natural killer cell-mediated cytotoxicity and antigen presentation. Along with its effectors, orchestrates lysosomal transport and fusion. Localizes specifically to lysosomal membranes and mediates anterograde lysosomal motility by recruiting PLEKHM2, which in turn recruits the motor protein kinesin-1 on lysosomes. Required for lysosomal and cytolytic granule exocytosis. Critical factor involved in NK cell-mediated cytotoxicity. Drives the polarization of cytolytic granules and microtubule-organizing centers (MTOCs) toward the immune synapse between effector NK lymphocytes and target cells. In neurons, mediates the anterograde axonal long-range transport of presynaptic lysosome-related vesicles required for presynaptic biogenesis and synaptic function. Also acts as a regulator of endosome to lysosome trafficking pathways of special significance for host defense. Recruits RUFY1 onto early endosomes regulating endosomes to trans-Golgi network proteins retrieval. Regulates cargo trafficking to lysosomes by binding to PLEKHM1 and recruiting the HOPS subunit VPS41, resulting in functional assembly of the HOPS complex on lysosomal membranes. Plays an important role in cargo delivery to lysosomes for antigen presentation and microbial killing. Directs the intersection of CD1d with lipid antigens in lysosomes, and plays a role in intersecting phagosomes with lysosomes to generate phagolysosomes that kill microbes. Involved in the process of MHC II presentation. Regulates the delivery of antigens to lysosomes and the formation of MHC II-peptide complexes through the recruitment of the HOPS complex to lysosomes allowing the fusion of late endosomes to lysosomes. May play a role in chromosome segregation. This chain is ADP-ribosylation factor-like protein 8B (ARL8B), found in Bos taurus (Bovine).